Consider the following 3284-residue polypeptide: Location of vulva defective 1 (3284 aa).

A signal peptide spans 1-21 (MKKSNFFVLLLLAISAIQIDG). Disordered regions lie at residues 226-326 (ESTS…ITST), 350-505 (TTML…GTNP), 623-702 (VASS…ADST), 827-926 (STSE…ASTE), and 1043-1216 (TTTE…SLAT). 2 stretches are compositionally biased toward low complexity: residues 227–326 (STST…ITST) and 350–500 (TTML…TTSS). Low complexity predominate over residues 827–913 (STSEVTSTTS…PSDSSSASDS (87 aa)). The segment covering 914–926 (MRTTTVDPDASTE) has biased composition (polar residues). Residues 1043 to 1057 (TTTETPPTTVSSSDD) show a composition bias toward low complexity. Residues 1060–1078 (GKTGGTGATGGTGGTGSGG) show a composition bias toward gly residues. Residues 1079–1104 (SATTLSTGDAVRSTTSGSGSGQSSTG) are compositionally biased toward low complexity. Residues 1105–1127 (SGAGGSGTTASGSGSGGSSGTGS) are compositionally biased toward gly residues. A compositionally biased stretch (polar residues) spans 1128–1138 (DGVNSGKTTAL). The span at 1163-1192 (GSGSDSNGSSGVSTKSSSGSDTSGSSDSSG) shows a compositional bias: low complexity. Over residues 1197–1216 (FSATAQPSTRTTKTRSSLAT) the composition is skewed to polar residues. Residues 2064–2227 (WNNSLQVEII…SVGAFNPTID (164 aa)) form the GAIN-B domain. Residues Cys-2181 and Cys-2209 are joined by a disulfide bond. The tract at residues 2181–2227 (CYFYQKTSDVFNSEGMYPSDGQGMQFVNCSTDHLTMFSVGAFNPTID) is GPS. A helical transmembrane segment spans residues 2245 to 2265 (VMIAAVFMLVVYGCLTINAII). The PLAT domain maps to 2288-2411 (YMYVIAVETG…GDGETERLAR (124 aa)). The next 10 helical transmembrane spans lie at 2453–2473 (DYSV…ITIL), 2496–2516 (IAFG…HILL), 2557–2577 (IIVF…MSLM), 2592–2612 (LILW…FLIL), 2672–2692 (LFIT…MVML), 2945–2965 (MLYI…YLYG), 2994–3014 (WNFM…AYTI), 3043–3063 (WEIV…CKMI), 3089–3109 (FGIA…AVLG), and 3144–3164 (FAFV…LQLY).

It belongs to the polycystin family. In terms of assembly, interacts (via PLAT domain) with atp-2 (via N-terminus) and with kin-10 (via C-terminus). Interacts (via C-terminus) with isoform a of stam-1/pqn-19 (via C-terminus). Post-translationally, autoproteolytically processed at the GPS region of the GAIN-B domain; this cleavage modulates receptor activity. In terms of tissue distribution, exclusively expressed in a subset of three categories of adult male sensory neurons: ray neurons, hook neurons and head cephalic (CEM) neurons.

It localises to the membrane. The protein localises to the cell projection. The protein resides in the cilium. Required for two aspects of male mating behavior: response to hermaphrodite contact and vulva location. Acts in the same pathway as pkd-2 and atp-2 in response behavior. May be required for ciliary targeting of pkd-2. The protein is Location of vulva defective 1 (lov-1) of Caenorhabditis elegans.